Consider the following 74-residue polypeptide: Putative Fe(2+) transport protein A (74 aa).

Belongs to the FeoA family.

In terms of biological role, might be involved in Fe(2+) ion uptake. The protein is Putative Fe(2+) transport protein A of Campylobacter jejuni subsp. jejuni serotype O:2 (strain ATCC 700819 / NCTC 11168).